The chain runs to 81 residues: MTTTMKTFVAFVLTVFFIMSSAHCRTTTGGSPGYGIGGRTKTCFTPALCIYRGVHGCDSYCKTKNFDYGYCRQEHCCCVNY.

An N-terminal signal peptide occupies residues 1–24 (MTTTMKTFVAFVLTVFFIMSSAHC). 4 disulfides stabilise this stretch: C43–C78, C49–C71, C57–C76, and C61–C77.

Belongs to the DEFL family.

It is found in the secreted. The protein is Putative defensin-like protein 102 of Arabidopsis thaliana (Mouse-ear cress).